The primary structure comprises 231 residues: Large ribosomal subunit protein uL1 (231 aa).

It belongs to the universal ribosomal protein uL1 family. In terms of assembly, part of the 50S ribosomal subunit.

Binds directly to 23S rRNA. The L1 stalk is quite mobile in the ribosome, and is involved in E site tRNA release. Its function is as follows. Protein L1 is also a translational repressor protein, it controls the translation of the L11 operon by binding to its mRNA. The polypeptide is Large ribosomal subunit protein uL1 (Chromobacterium violaceum (strain ATCC 12472 / DSM 30191 / JCM 1249 / CCUG 213 / NBRC 12614 / NCIMB 9131 / NCTC 9757 / MK)).